Reading from the N-terminus, the 416-residue chain is UPF0761 membrane protein Rfer_2991 (416 aa).

Transmembrane regions (helical) follow at residues 60–80 (MALV…PMFA), 117–137 (LGGA…LTID), 156–176 (VLVY…SLSI), 187–207 (VVGV…FFMV), 222–242 (WVKW…LELA), and 268–288 (ILLI…VIAA).

The protein belongs to the UPF0761 family.

The protein localises to the cell inner membrane. The protein is UPF0761 membrane protein Rfer_2991 of Albidiferax ferrireducens (strain ATCC BAA-621 / DSM 15236 / T118) (Rhodoferax ferrireducens).